The chain runs to 456 residues: Phosphomannomutase (456 aa).

The Phosphoserine intermediate role is filled by serine 98. The Mg(2+) site is built by serine 98, aspartate 245, aspartate 247, and aspartate 249.

This sequence belongs to the phosphohexose mutase family. Requires Mg(2+) as cofactor.

It catalyses the reaction alpha-D-mannose 1-phosphate = D-mannose 6-phosphate. It participates in nucleotide-sugar biosynthesis; GDP-alpha-D-mannose biosynthesis; alpha-D-mannose 1-phosphate from D-fructose 6-phosphate: step 2/2. The protein operates within bacterial outer membrane biogenesis; LPS O-antigen biosynthesis. Its function is as follows. Involved in GDP-mannose biosynthesis which serves as the activated sugar nucleotide precursor for mannose residues in cell surface polysaccharides. This enzyme participates in synthesis of the LPS O antigen. This chain is Phosphomannomutase (manB), found in Salmonella montevideo.